The sequence spans 294 residues: Melanocortin receptor 5 (294 aa).

The Extracellular portion of the chain corresponds to 1 to 29 (FLDLQLNATEGNVSGPSVGNTSSPCEDMG). N-linked (GlcNAc...) asparagine glycans are attached at residues Asn7, Asn12, and Asn20. The helical transmembrane segment at 30–53 (IEVEVFLTLGLISLLENILVIGAI) threads the bilayer. Residues 54–65 (ARNKNLHVPMYF) are Cytoplasmic-facing. Residues 66-89 (FVCSLAVADMLVSLSNSWETITIY) traverse the membrane as a helical segment. Residues 90-106 (LIANKHLVLSDTSVRHL) are Extracellular-facing. The helical transmembrane segment at 107 to 130 (DNVFDSMICISLVASMCSLLAVAV) threads the bilayer. Topologically, residues 131–147 (DRYVTIFYALRYQHLMT) are cytoplasmic. The helical transmembrane segment at 148–171 (GRRCGAIIAGIWALCTGCGPVFIV) threads the bilayer. The Extracellular portion of the chain corresponds to 172–178 (YYESTYV). Residues 179 to 203 (VVCLVAMFLTMLLLMASLYAHMFLQ) traverse the membrane as a helical segment. The Cytoplasmic portion of the chain corresponds to 204 to 231 (ARAHVRRIAALPGYRSARQRTSMKGAVT). A helical transmembrane segment spans residues 232-257 (LAMLLGVFIVCWAPFFLHLILMISCP). Residues 258–265 (QNLYCSCF) lie on the Extracellular side of the membrane. The chain crosses the membrane as a helical span at residues 266–289 (MSHFNMYLILIMCNSVIDPLIYAF). Over 290–294 (RSQEK) the chain is Cytoplasmic.

It belongs to the G-protein coupled receptor 1 family.

It localises to the cell membrane. Its function is as follows. Receptor for MSH (alpha, beta and gamma) and ACTH. The activity of this receptor is mediated by G proteins which activate adenylate cyclase. This receptor is a possible mediator of the immunomodulation properties of melanocortins. The sequence is that of Melanocortin receptor 5 (MC5R) from Sus scrofa (Pig).